An 846-amino-acid chain; its full sequence is Iron-sulfur cluster assembly SufBD family protein Mb1496 (846 aa).

The interval 1 to 20 (MTLTPEASKSVAQPPTQAPL) is disordered. In terms of domain architecture, DOD-type homing endonuclease spans 388-528 (LAGYYLAEGH…LQSILARLGH (141 aa)).

This sequence belongs to the iron-sulfur cluster assembly SufBD family. This protein undergoes a protein self splicing that involves a post-translational excision of the intervening region (intein) followed by peptide ligation.

The protein is Iron-sulfur cluster assembly SufBD family protein Mb1496 of Mycobacterium bovis (strain ATCC BAA-935 / AF2122/97).